We begin with the raw amino-acid sequence, 498 residues long: Hexokinase-3 (498 aa).

Residues 4–24 (VAVAFAAVAVVAACSVAAVMV) form a helical membrane-spanning segment. The region spanning 35 to 494 (RTVVEILKEL…SSIGSALLVA (460 aa)) is the Hexokinase domain. Residues 90 to 227 (TGREKGTYYA…GLDMHVAALV (138 aa)) form a hexokinase small subdomain region. ADP-binding residues include glycine 104 and threonine 105. Positions 193, 194, 228, and 229 each coordinate D-glucose. A hexokinase large subdomain region spans residues 228-483 (NDTVGALSLG…QYVVVKAMED (256 aa)). An ADP-binding site is contributed by threonine 252. The D-glucose site is built by asparagine 255, glutamate 283, and glutamate 314. Glycine 448 is an ADP binding site.

Belongs to the hexokinase family. Expressed in roots, emerging lateral roots, vascular tissues of cotyledons, roots and leaves, root and shoot meristems, anther filaments and funiculi of mature seeds.

The protein localises to the mitochondrion outer membrane. It catalyses the reaction a D-hexose + ATP = a D-hexose 6-phosphate + ADP + H(+). It carries out the reaction D-fructose + ATP = D-fructose 6-phosphate + ADP + H(+). The enzyme catalyses D-glucose + ATP = D-glucose 6-phosphate + ADP + H(+). It participates in carbohydrate metabolism; hexose metabolism. Its pathway is carbohydrate degradation; glycolysis; D-glyceraldehyde 3-phosphate and glycerone phosphate from D-glucose: step 1/4. Fructose and glucose phosphorylating enzyme. May be involved in the phosphorylation of glucose during the export from mitochondrion to cytosol. Plays a role in plant growth and development, perhaps by mediating cross-talk between glucose and hormone response pathways. Involved in root hair cell development by mediating certain aspects of cross talk between glucose and ethylene response pathways. This chain is Hexokinase-3, found in Arabidopsis thaliana (Mouse-ear cress).